We begin with the raw amino-acid sequence, 428 residues long: Immunoglobulin superfamily containing leucine-rich repeat protein (428 aa).

An N-terminal signal peptide occupies residues 1 to 18 (MQELRLLCLVVLVGLAQA). In terms of domain architecture, LRRNT spans 19 to 50 (CPEPCECGEKYGFHIADCAYRDLQAVPSGFPA). N-linked (GlcNAc...) asparagine glycosylation is present at Asn-51. LRR repeat units lie at residues 51-72 (NVTT…AFRE), 75-96 (RLQS…ALAS), 99-122 (QLKS…HSLS), 123-144 (ALQL…AFRS), and 147-168 (ALRS…TFAP). An LRRCT domain is found at 180 to 231 (NPFDCTCGIVWFKTWALTTAVSIPEQDNITCTSPHVLKGTRLNRLLPLPCSA). The region spanning 232-343 (PSVQLTYQPS…GSAESSVNVA (112 aa)) is the Ig-like domain. A disulfide bond links Cys-257 and Cys-327. The N-linked (GlcNAc...) asparagine glycan is linked to Asn-309.

The protein localises to the secreted. The polypeptide is Immunoglobulin superfamily containing leucine-rich repeat protein (ISLR) (Bos taurus (Bovine)).